The following is a 140-amino-acid chain: Nucleoside diphosphate kinase (140 aa).

Lys11, Phe59, Arg87, Thr93, Arg104, and Asn114 together coordinate ATP. His117 (pros-phosphohistidine intermediate) is an active-site residue.

This sequence belongs to the NDK family. As to quaternary structure, homotetramer. Mg(2+) serves as cofactor.

It is found in the cytoplasm. It catalyses the reaction a 2'-deoxyribonucleoside 5'-diphosphate + ATP = a 2'-deoxyribonucleoside 5'-triphosphate + ADP. It carries out the reaction a ribonucleoside 5'-diphosphate + ATP = a ribonucleoside 5'-triphosphate + ADP. In terms of biological role, major role in the synthesis of nucleoside triphosphates other than ATP. The ATP gamma phosphate is transferred to the NDP beta phosphate via a ping-pong mechanism, using a phosphorylated active-site intermediate. The chain is Nucleoside diphosphate kinase from Rickettsia felis (strain ATCC VR-1525 / URRWXCal2) (Rickettsia azadi).